The chain runs to 260 residues: Global transcriptional regulator CodY (260 aa).

Residues Met1–Leu159 are GAF domain. Residues Ala207 to Arg226 constitute a DNA-binding region (H-T-H motif).

The protein belongs to the CodY family.

The protein localises to the cytoplasm. Its function is as follows. DNA-binding global transcriptional regulator which is involved in the adaptive response to starvation and acts by directly or indirectly controlling the expression of numerous genes in response to nutrient availability. During rapid exponential growth, CodY is highly active and represses genes whose products allow adaptation to nutrient depletion. This is Global transcriptional regulator CodY from Streptococcus uberis (strain ATCC BAA-854 / 0140J).